The chain runs to 342 residues: Nicotinate-nucleotide--dimethylbenzimidazole phosphoribosyltransferase (342 aa).

Glu-311 (proton acceptor) is an active-site residue.

It belongs to the CobT family.

The catalysed reaction is 5,6-dimethylbenzimidazole + nicotinate beta-D-ribonucleotide = alpha-ribazole 5'-phosphate + nicotinate + H(+). Its pathway is nucleoside biosynthesis; alpha-ribazole biosynthesis; alpha-ribazole from 5,6-dimethylbenzimidazole: step 1/2. Catalyzes the synthesis of alpha-ribazole-5'-phosphate from nicotinate mononucleotide (NAMN) and 5,6-dimethylbenzimidazole (DMB). In Vibrio vulnificus (strain CMCP6), this protein is Nicotinate-nucleotide--dimethylbenzimidazole phosphoribosyltransferase.